A 603-amino-acid chain; its full sequence is Geraniol synthase Tps-5031G8, chloroplastic (603 aa).

A chloroplast-targeting transit peptide spans 1 to 35; sequence MCSISQKVVIGLNKAAANNCLQNLDRRGFKTRRVS. (2E)-geranyl diphosphate contacts are provided by arginine 319, aspartate 356, aspartate 360, arginine 497, and aspartate 500. Aspartate 356 and aspartate 360 together coordinate Mg(2+). The DDXXD motif signature appears at 356-360; that stretch reads DDVYD. Residues aspartate 500, threonine 504, and glutamate 508 each coordinate Mg(2+).

It belongs to the terpene synthase family. Tpsb subfamily. Monomer. Mg(2+) is required as a cofactor. Mn(2+) serves as cofactor.

The protein resides in the plastid. Its subcellular location is the chloroplast. The enzyme catalyses (2E)-geranyl diphosphate + H2O = (2E)-geraniol + diphosphate. It functions in the pathway secondary metabolite biosynthesis; terpenoid biosynthesis. Its function is as follows. Monoterpene synthase (mono-TPS) involved in the biosynthesis of monoterpenes natural products. Catalyzes the conversion of (2E)-geranyl diphosphate (GPP) into geraniol. The chain is Geraniol synthase Tps-5031G8, chloroplastic from Perilla frutescens var. hirtella (Perilla citriodora).